The following is a 340-amino-acid chain: tRNA N6-adenosine threonylcarbamoyltransferase (340 aa).

Residues histidine 111 and histidine 115 each coordinate Fe cation. Substrate-binding positions include 134–138 (LVSGG), aspartate 167, glycine 180, and asparagine 272. Aspartate 300 is a binding site for Fe cation.

This sequence belongs to the KAE1 / TsaD family. It depends on Fe(2+) as a cofactor.

It is found in the cytoplasm. It carries out the reaction L-threonylcarbamoyladenylate + adenosine(37) in tRNA = N(6)-L-threonylcarbamoyladenosine(37) in tRNA + AMP + H(+). Its function is as follows. Required for the formation of a threonylcarbamoyl group on adenosine at position 37 (t(6)A37) in tRNAs that read codons beginning with adenine. Is involved in the transfer of the threonylcarbamoyl moiety of threonylcarbamoyl-AMP (TC-AMP) to the N6 group of A37, together with TsaE and TsaB. TsaD likely plays a direct catalytic role in this reaction. This is tRNA N6-adenosine threonylcarbamoyltransferase from Proteus mirabilis (strain HI4320).